The sequence spans 198 residues: Ribonuclease HII (198 aa).

The RNase H type-2 domain occupies 14-198 (GVIAGVDEVG…RNFAPISRAL (185 aa)). A divalent metal cation-binding residues include Asp20, Glu21, and Asp112.

The protein belongs to the RNase HII family. The cofactor is Mn(2+). Mg(2+) is required as a cofactor.

The protein resides in the cytoplasm. It carries out the reaction Endonucleolytic cleavage to 5'-phosphomonoester.. Endonuclease that specifically degrades the RNA of RNA-DNA hybrids. The polypeptide is Ribonuclease HII (Wolbachia sp. subsp. Drosophila simulans (strain wRi)).